We begin with the raw amino-acid sequence, 195 residues long: ATP-dependent Clp protease proteolytic subunit (195 aa).

Catalysis depends on Ser94, which acts as the Nucleophile. The active site involves His119.

It belongs to the peptidase S14 family. As to quaternary structure, component of the chloroplastic Clp protease core complex.

Its subcellular location is the plastid. It is found in the chloroplast stroma. It carries out the reaction Hydrolysis of proteins to small peptides in the presence of ATP and magnesium. alpha-casein is the usual test substrate. In the absence of ATP, only oligopeptides shorter than five residues are hydrolyzed (such as succinyl-Leu-Tyr-|-NHMec, and Leu-Tyr-Leu-|-Tyr-Trp, in which cleavage of the -Tyr-|-Leu- and -Tyr-|-Trp bonds also occurs).. Cleaves peptides in various proteins in a process that requires ATP hydrolysis. Has a chymotrypsin-like activity. Plays a major role in the degradation of misfolded proteins. This Cycas taitungensis (Prince sago) protein is ATP-dependent Clp protease proteolytic subunit.